The chain runs to 101 residues: Large ribosomal subunit protein uL24 (101 aa).

It belongs to the universal ribosomal protein uL24 family. Part of the 50S ribosomal subunit.

Functionally, one of two assembly initiator proteins, it binds directly to the 5'-end of the 23S rRNA, where it nucleates assembly of the 50S subunit. In terms of biological role, one of the proteins that surrounds the polypeptide exit tunnel on the outside of the subunit. The polypeptide is Large ribosomal subunit protein uL24 (Streptococcus agalactiae serotype III (strain NEM316)).